A 355-amino-acid polypeptide reads, in one-letter code: D-alanine--D-alanine ligase (355 aa).

The 208-residue stretch at 143-350 (KKIFSHLEIP…IDQLVAKLVD (208 aa)) folds into the ATP-grasp domain. 178–233 (IEKLKLPVFVKPANSGSSLGISKAKTRSEIIKALQKAWEIDSRIVIEEGLDVRELE) is a binding site for ATP. Mg(2+)-binding residues include Asp303, Glu317, and Asn319.

Belongs to the D-alanine--D-alanine ligase family. It depends on Mg(2+) as a cofactor. Requires Mn(2+) as cofactor.

It is found in the cytoplasm. It carries out the reaction 2 D-alanine + ATP = D-alanyl-D-alanine + ADP + phosphate + H(+). It participates in cell wall biogenesis; peptidoglycan biosynthesis. Cell wall formation. The sequence is that of D-alanine--D-alanine ligase from Prochlorococcus marinus subsp. pastoris (strain CCMP1986 / NIES-2087 / MED4).